The following is a 439-amino-acid chain: tRNA-2-methylthio-N(6)-dimethylallyladenosine synthase (439 aa).

One can recognise an MTTase N-terminal domain in the interval 5–121 (KKLFIKTYGC…LPELEAKTRA (117 aa)). [4Fe-4S] cluster is bound by residues C14, C50, C84, C159, C163, and C166. The 234-residue stretch at 145-378 (AKRGPTAFLT…ITRHQREIQD (234 aa)) folds into the Radical SAM core domain. One can recognise a TRAM domain in the interval 378–439 (DGMVGREVSV…GANSLAGELA (62 aa)).

Belongs to the methylthiotransferase family. MiaB subfamily. In terms of assembly, monomer. It depends on [4Fe-4S] cluster as a cofactor.

Its subcellular location is the cytoplasm. The enzyme catalyses N(6)-dimethylallyladenosine(37) in tRNA + (sulfur carrier)-SH + AH2 + 2 S-adenosyl-L-methionine = 2-methylsulfanyl-N(6)-dimethylallyladenosine(37) in tRNA + (sulfur carrier)-H + 5'-deoxyadenosine + L-methionine + A + S-adenosyl-L-homocysteine + 2 H(+). Functionally, catalyzes the methylthiolation of N6-(dimethylallyl)adenosine (i(6)A), leading to the formation of 2-methylthio-N6-(dimethylallyl)adenosine (ms(2)i(6)A) at position 37 in tRNAs that read codons beginning with uridine. The sequence is that of tRNA-2-methylthio-N(6)-dimethylallyladenosine synthase from Ruegeria pomeroyi (strain ATCC 700808 / DSM 15171 / DSS-3) (Silicibacter pomeroyi).